The sequence spans 164 residues: Ribosome maturation factor RimP (164 aa).

It belongs to the RimP family.

Its subcellular location is the cytoplasm. Required for maturation of 30S ribosomal subunits. In Cellvibrio japonicus (strain Ueda107) (Pseudomonas fluorescens subsp. cellulosa), this protein is Ribosome maturation factor RimP.